Consider the following 207-residue polypeptide: C-type lectin domain family 2 member D (207 aa).

The Cytoplasmic segment spans residues 1 to 41; sequence MCVTKASLPMLSPTGSPQEVEVGKILQGKRHGTISPESCAK. Ser7 and Ser12 each carry phosphoserine. Residues 42–62 form a helical; Signal-anchor for type II membrane protein membrane-spanning segment; the sequence is LYCYYGVIMVLTVAVIALSVA. Residues 63-207 lie on the Extracellular side of the membrane; sequence LSATKTEQIP…LHCQTPFFPS (145 aa). The cysteines at positions 80 and 91 are disulfide-linked. A C-type lectin domain is found at 87–202; it reads VENKCFYFSE…LNSYSLHCQT (116 aa). The N-linked (GlcNAc...) asparagine glycan is linked to Asn100.

As to quaternary structure, homodimer; disulfide-linked. In terms of processing, N-glycosylated. In terms of tissue distribution, detected in fetal heart, brain, lung, chondrocytes, perichondrium and osteoblasts, and in adult splenocytes, thymocytes, lymph-node cells, osteoblasts, growth plate chondrocytes and skeletal muscle overlying the bone (at protein level). Ubiquitous. Detected in thymus, bone marrow, lung, gut, heart, skeletal muscle, ovary, spleen, ileum, liver and kidney.

The protein resides in the cell membrane. Functionally, receptor for KLRB1B that protects target cells against natural killer cell-mediated lysis. Inhibits osteoclast formation. Binds high molecular weight sulfated glycosaminoglycans. In Mus musculus (Mouse), this protein is C-type lectin domain family 2 member D (Clec2d).